The chain runs to 471 residues: MARCISFLSTSSSLPCATKPPCCSVSSVLPSSPSSHQCRGRKTSCGSIRALREDWRERSKAIPPGGVYPAKDHCSQCGLCDTYYIAHVKNACAFLGDGMSRVEDLEPLVHGRGRKQDMDEMYFGVYEQLLYARKMKPVEGAQWTGIVTTIAVEMLKANMVDAVVCVQSDPDDRLAPMPVLARTPDEVIAAKGVKPTLSPNLNTLALVEAAGVKRLLFCGVGCQVQALRSVEKYLGLEKLYVLGTNCVDNGTREGLDKFLKAASSEPETVLHYEFMQDYKVHLKHLDGHIEEVPYFCLPAKDLVDVIAPSCYSCFDYTNGLADLVVGYMGVPKYPGVSMTQHPQYITVRNDRGREMLSLVEGLLESTPTVSSGVRQPFVIETVKADDEAKQGRGPSQPAPTFVGNVIAFLLNLIGPKGLEFARYSLDYHTIRNYLHVNRAWGKQRAEQHIPSYAKKIVEAYDKDGRIESMLQ.

Residues 1 to 44 (MARCISFLSTSSSLPCATKPPCCSVSSVLPSSPSSHQCRGRKTS) constitute a chloroplast transit peptide.

This sequence belongs to the FrhB family. FAD is required as a cofactor. It depends on iron-sulfur cluster as a cofactor.

The protein resides in the plastid. It is found in the chloroplast. It carries out the reaction chlorophyll a + 2 oxidized [2Fe-2S]-[ferredoxin] + H2O = 7(1)-hydroxychlorophyll a + 2 reduced [2Fe-2S]-[ferredoxin] + 2 H(+). Probable iron-sulfur flavoprotein that converts 7-hydroxymethyl chlorophyll a to chlorophyll a using ferredoxin as a reducing equivalent. Catalyzes the reduction of a hydroxymethyl group to a methyl group. This chain is 7-hydroxymethyl chlorophyll a reductase, chloroplastic (HCAR), found in Oryza sativa subsp. japonica (Rice).